Consider the following 752-residue polypeptide: MEAPGIVWVEESVSAITLYAVWLPPRTRDCLHALLYLVCRDAAGEARARFAEVSVGSSDLQDFYGSPDVSAPGAVAAARAATAPAASPLEPLGDPTLWRALYACVLAALERQTGRWALFVPLRLGWDPQTGLVVRVERASWGPPAAPRAALLDVEAKVDVDPLALSARVAEHPGARLAWARLAAIRDSPQCASSASLAVTITTRTARFAREYTTLAFPPTRKEGAFADLVEVCEVGLRPRGHPQRVTARVLLPRGYDYFVSAGDGFSAPALVALFRQWHTTVHAAPGALAPVFAFLGPGFEVRGGPVQYFAVLGFPGWPTFTVPAAAAAESARDLVRGAAATHAACLGAWPAVGARVVLPPRAWPAVASEAAGRLLPAFREAVARWHPTATTIQLLDPPAAVGPVWTARFCFSGLQAQLLAALAGLGEAGLPEARGRAGLERLDALVAAAPSEPWARAVLERLVPDACDACPALRQLLGGVMAAVCLQIEQTASSVKFAVCGGTGAAFWGLFNVDPGDADAAHGAIQDARRALEASVRAVLSANGIRPRLAPSLAPEGVYTHVVTWSQTGAWFWNSRDDTDFLQGFPLRGAAYAAAAEVMRDALRRILRRPAAGPPEEAVCAARGVMEDACDRFVLDAFGRRLDAEYWSVLTPPGEADDPLPQTAFRGGALLDAEQYWRRVVRVCPGGGESVGVPVDLYPRPLVLPPVDCAHHLREILREIQLVFTGVLEGVWGEGGSFVYPFDEKIRFLFP.

It belongs to the herpesviridae HEPA family. As to quaternary structure, associates with the primase and the helicase to form the helicase-primase complex. Interacts with the origin-binding protein. Interacts with the polymerase catalytic subunit.

Its subcellular location is the host nucleus. Functionally, component of the helicase/primase complex. Unwinds the DNA at the replication forks and generates single-stranded DNA for both leading and lagging strand synthesis. The primase synthesizes short RNA primers on the lagging strand that the polymerase presumably elongates using dNTPs. The primase-associated factor has no known catalytic activity in the complex and may serve to facilitate the formation of the replisome by directly interacting with the origin-binding protein and the polymerase. The polypeptide is DNA helicase/primase complex-associated protein (Homo sapiens (Human)).